The following is a 181-amino-acid chain: Oligoribonuclease (181 aa).

The 164-residue stretch at 8-171 folds into the Exonuclease domain; the sequence is LIWIDLEMTG…DDIRESVGEL (164 aa). Residue Y129 is part of the active site.

It belongs to the oligoribonuclease family.

Its subcellular location is the cytoplasm. In terms of biological role, 3'-to-5' exoribonuclease specific for small oligoribonucleotides. The protein is Oligoribonuclease of Serratia proteamaculans (strain 568).